Reading from the N-terminus, the 150-residue chain is Large ribosomal subunit protein bL9 (150 aa).

It belongs to the bacterial ribosomal protein bL9 family.

Functionally, binds to the 23S rRNA. This is Large ribosomal subunit protein bL9 from Corynebacterium glutamicum (strain R).